The following is a 186-amino-acid chain: Transcription factor FapR (186 aa).

The protein belongs to the FapR family.

Its function is as follows. Transcriptional factor involved in regulation of membrane lipid biosynthesis by repressing genes involved in fatty acid and phospholipid metabolism. In Halalkalibacterium halodurans (strain ATCC BAA-125 / DSM 18197 / FERM 7344 / JCM 9153 / C-125) (Bacillus halodurans), this protein is Transcription factor FapR.